A 496-amino-acid chain; its full sequence is Amino-acid acetyltransferase, mitochondrial (496 aa).

In terms of domain architecture, N-acetyltransferase spans 333–493; sequence YHGTDCLTNG…LDVIDSIQPT (161 aa).

Belongs to the acetyltransferase family.

Its subcellular location is the mitochondrion. The catalysed reaction is L-glutamate + acetyl-CoA = N-acetyl-L-glutamate + CoA + H(+). Its pathway is amino-acid biosynthesis; L-arginine biosynthesis; N(2)-acetyl-L-ornithine from L-glutamate: step 1/4. In terms of biological role, N-acetylglutamate synthase involved in arginine biosynthesis. The polypeptide is Amino-acid acetyltransferase, mitochondrial (arg2) (Schizosaccharomyces japonicus (strain yFS275 / FY16936) (Fission yeast)).